Consider the following 334-residue polypeptide: tRNA-dihydrouridine(20/20a) synthase (334 aa).

FMN-binding positions include 17 to 19 (PMM) and Q70. The Proton donor role is filled by C100. FMN contacts are provided by residues K139, H171, 211–213 (NGG), and 233–234 (GR).

Belongs to the Dus family. DusA subfamily. It depends on FMN as a cofactor.

It catalyses the reaction 5,6-dihydrouridine(20) in tRNA + NADP(+) = uridine(20) in tRNA + NADPH + H(+). The catalysed reaction is 5,6-dihydrouridine(20) in tRNA + NAD(+) = uridine(20) in tRNA + NADH + H(+). The enzyme catalyses 5,6-dihydrouridine(20a) in tRNA + NADP(+) = uridine(20a) in tRNA + NADPH + H(+). It carries out the reaction 5,6-dihydrouridine(20a) in tRNA + NAD(+) = uridine(20a) in tRNA + NADH + H(+). In terms of biological role, catalyzes the synthesis of 5,6-dihydrouridine (D), a modified base found in the D-loop of most tRNAs, via the reduction of the C5-C6 double bond in target uridines. Specifically modifies U20 and U20a in tRNAs. In Synechocystis sp. (strain ATCC 27184 / PCC 6803 / Kazusa), this protein is tRNA-dihydrouridine(20/20a) synthase (dus2).